Consider the following 293-residue polypeptide: Meteorin (293 aa).

An N-terminal signal peptide occupies residues 1 to 23 (MGFPAAALLCALCCGLLAPAARA). Intrachain disulfides connect Cys-30–Cys-51, Cys-82–Cys-118, Cys-171–Cys-242, Cys-174–Cys-266, and Cys-184–Cys-288.

The protein belongs to the meteorin family. Monomer.

The protein localises to the secreted. Its function is as follows. Involved in both glial cell differentiation and axonal network formation during neurogenesis. Promotes astrocyte differentiation and transforms cerebellar astrocytes into radial glia. Also induces axonal extension in small and intermediate neurons of sensory ganglia by activating nearby satellite glia. This is Meteorin (METRN) from Homo sapiens (Human).